Consider the following 683-residue polypeptide: Long-chain fatty acid transport protein 3 (683 aa).

The helical transmembrane segment at 3–23 (ALLLLPLLLLLPLLLLKLHLW) threads the bilayer. Over residues 119 to 128 (GGDSGEGSAG) the composition is skewed to gly residues. The interval 119 to 145 (GGDSGEGSAGEGERAAPGAGDAAAGSG) is disordered. The span at 133–145 (AAPGAGDAAAGSG) shows a compositional bias: low complexity. ATP-binding positions include 288 to 292 (TSGTT), histidine 331, threonine 428, aspartate 528, arginine 543, and lysine 635.

This sequence belongs to the ATP-dependent AMP-binding enzyme family. As to expression, expressed in bronchial and bronchiolar epithelial cells (at protein level).

The protein resides in the mitochondrion membrane. It catalyses the reaction a fatty acid(in) = a fatty acid(out). It carries out the reaction a long-chain fatty acid + ATP + CoA = a long-chain fatty acyl-CoA + AMP + diphosphate. The enzyme catalyses hexadecanoate + ATP + CoA = hexadecanoyl-CoA + AMP + diphosphate. The catalysed reaction is (9Z)-octadecenoate + ATP + CoA = (9Z)-octadecenoyl-CoA + AMP + diphosphate. It catalyses the reaction (9Z,12Z)-octadecadienoate + ATP + CoA = (9Z,12Z)-octadecadienoyl-CoA + AMP + diphosphate. It carries out the reaction (5Z,8Z,11Z,14Z)-eicosatetraenoate + ATP + CoA = (5Z,8Z,11Z,14Z)-eicosatetraenoyl-CoA + AMP + diphosphate. The enzyme catalyses a very long-chain fatty acid + ATP + CoA = a very long-chain fatty acyl-CoA + AMP + diphosphate. The catalysed reaction is tetracosanoate + ATP + CoA = tetracosanoyl-CoA + AMP + diphosphate. Functionally, mainly functions as an acyl-CoA ligase catalyzing the ATP-dependent formation of fatty acyl-CoA using LCFA and very-long-chain fatty acids (VLCFA) as substrates. Can mediate the levels of long-chain fatty acids (LCFA) in the cell by facilitating their transport across membranes. This chain is Long-chain fatty acid transport protein 3, found in Homo sapiens (Human).